The chain runs to 78 residues: MTKFSLLDHESVPKHEIMPEGELKSVLSKYSIEKEQLPKIKVHDPVCKEIGAVVGDVVKITRISQTAGEAEYYRLVIE.

It belongs to the archaeal Rpo5/eukaryotic RPB5 RNA polymerase subunit family. As to quaternary structure, part of the RNA polymerase complex.

The protein resides in the cytoplasm. The enzyme catalyses RNA(n) + a ribonucleoside 5'-triphosphate = RNA(n+1) + diphosphate. Functionally, DNA-dependent RNA polymerase (RNAP) catalyzes the transcription of DNA into RNA using the four ribonucleoside triphosphates as substrates. The sequence is that of DNA-directed RNA polymerase subunit Rpo5 from Methanosarcina barkeri (strain Fusaro / DSM 804).